We begin with the raw amino-acid sequence, 508 residues long: Glucose-1-phosphate adenylyltransferase small subunit 1, chloroplastic (508 aa).

The disordered stretch occupies residues 1–27 (MSSIVTSGVINVPRSSSSSKNLSFSSS). The transit peptide at 1–59 (MSSIVTSGVINVPRSSSSSKNLSFSSSSQLSGNKILTVSGNGAPRGRCTLKHVFLTPKA) directs the protein to the chloroplast. Residues 15–27 (SSSSSKNLSFSSS) show a composition bias toward low complexity.

It belongs to the bacterial/plant glucose-1-phosphate adenylyltransferase family. In terms of assembly, heterotetramer. As to expression, seeds.

The protein localises to the plastid. It is found in the chloroplast. It catalyses the reaction alpha-D-glucose 1-phosphate + ATP + H(+) = ADP-alpha-D-glucose + diphosphate. The protein operates within glycan biosynthesis; starch biosynthesis. Activated by 3'phosphoglycerate, inhibited by orthophosphate. Allosteric regulation. This protein plays a role in synthesis of starch. It catalyzes the synthesis of the activated glycosyl donor, ADP-glucose from Glc-1-P and ATP. This is Glucose-1-phosphate adenylyltransferase small subunit 1, chloroplastic (AGPC) from Vicia faba (Broad bean).